The chain runs to 66 residues: Sodium channel alpha-toxin Acra8 (66 aa).

The 63-residue stretch at 2–64 (RDGYIVDDKN…VPIKEKGRCN (63 aa)) folds into the LCN-type CS-alpha/beta domain. 4 disulfide bridges follow: Cys12-Cys63, Cys16-Cys36, Cys22-Cys46, and Cys26-Cys48. Residue Asn64 is modified to Asparagine amide. Residues 65 to 66 (GR) constitute a propeptide that is removed on maturation.

It belongs to the long (4 C-C) scorpion toxin superfamily. Sodium channel inhibitor family. Alpha subfamily. As to expression, expressed by the venom gland.

Its subcellular location is the secreted. Alpha toxins bind voltage-independently at site-3 of sodium channels (Nav) and inhibit the inactivation of the activated channels, thereby blocking neuronal transmission. The polypeptide is Sodium channel alpha-toxin Acra8 (Androctonus crassicauda (Arabian fat-tailed scorpion)).